A 453-amino-acid polypeptide reads, in one-letter code: Bifunctional protein GlmU (453 aa).

Residues 1-225 (MNIVILAAGT…EWETLGVNSK (225 aa)) are pyrophosphorylase. UDP-N-acetyl-alpha-D-glucosamine is bound by residues 6-9 (LAAG), Lys-20, Gln-71, 76-77 (GT), 98-100 (YGD), Gly-135, Glu-150, Asn-165, and Asn-223. Residue Asp-100 participates in Mg(2+) binding. Asn-223 is a binding site for Mg(2+). The tract at residues 226 to 246 (QQLAELERIHQHNVADALLVA) is linker. The interval 247-453 (GVTLADPARL…GYVRPTKKKS (207 aa)) is N-acetyltransferase. Residues Arg-329 and Lys-347 each contribute to the UDP-N-acetyl-alpha-D-glucosamine site. The active-site Proton acceptor is the His-359. Residues Tyr-362 and Asn-373 each coordinate UDP-N-acetyl-alpha-D-glucosamine. Acetyl-CoA contacts are provided by residues Ala-376, 382–383 (NY), Ser-401, and Ala-419.

This sequence in the N-terminal section; belongs to the N-acetylglucosamine-1-phosphate uridyltransferase family. The protein in the C-terminal section; belongs to the transferase hexapeptide repeat family. As to quaternary structure, homotrimer. The cofactor is Mg(2+).

The protein resides in the cytoplasm. The catalysed reaction is alpha-D-glucosamine 1-phosphate + acetyl-CoA = N-acetyl-alpha-D-glucosamine 1-phosphate + CoA + H(+). It carries out the reaction N-acetyl-alpha-D-glucosamine 1-phosphate + UTP + H(+) = UDP-N-acetyl-alpha-D-glucosamine + diphosphate. It functions in the pathway nucleotide-sugar biosynthesis; UDP-N-acetyl-alpha-D-glucosamine biosynthesis; N-acetyl-alpha-D-glucosamine 1-phosphate from alpha-D-glucosamine 6-phosphate (route II): step 2/2. The protein operates within nucleotide-sugar biosynthesis; UDP-N-acetyl-alpha-D-glucosamine biosynthesis; UDP-N-acetyl-alpha-D-glucosamine from N-acetyl-alpha-D-glucosamine 1-phosphate: step 1/1. It participates in bacterial outer membrane biogenesis; LPS lipid A biosynthesis. Catalyzes the last two sequential reactions in the de novo biosynthetic pathway for UDP-N-acetylglucosamine (UDP-GlcNAc). The C-terminal domain catalyzes the transfer of acetyl group from acetyl coenzyme A to glucosamine-1-phosphate (GlcN-1-P) to produce N-acetylglucosamine-1-phosphate (GlcNAc-1-P), which is converted into UDP-GlcNAc by the transfer of uridine 5-monophosphate (from uridine 5-triphosphate), a reaction catalyzed by the N-terminal domain. In Paraburkholderia phytofirmans (strain DSM 17436 / LMG 22146 / PsJN) (Burkholderia phytofirmans), this protein is Bifunctional protein GlmU.